The chain runs to 611 residues: uncharacterized protein (611 aa).

Belongs to the metallo-dependent hydrolases superfamily. N-acyl-D-amino-acid deacylase family.

This is an uncharacterized protein from Mycobacterium bovis (strain ATCC BAA-935 / AF2122/97).